The following is a 408-amino-acid chain: Elongation factor Tu, chloroplastic (408 aa).

Residues 10 to 213 (KPHVNIGTIG…KVDEYIPTPE (204 aa)) form the tr-type G domain. Residues 19-26 (GHVDHGKT) are G1. GTP is bound at residue 19–26 (GHVDHGKT). Threonine 26 is a binding site for Mg(2+). Positions 59 to 63 (GITIN) are G2. The tract at residues 80-83 (DCPG) is G3. GTP contacts are provided by residues 80–84 (DCPGH) and 135–138 (NKAD). The segment at 135–138 (NKAD) is G4. The tract at residues 173-175 (SAL) is G5.

This sequence belongs to the TRAFAC class translation factor GTPase superfamily. Classic translation factor GTPase family. EF-Tu/EF-1A subfamily.

The protein resides in the plastid. The protein localises to the chloroplast. It catalyses the reaction GTP + H2O = GDP + phosphate + H(+). GTP hydrolase that promotes the GTP-dependent binding of aminoacyl-tRNA to the A-site of ribosomes during protein biosynthesis. The sequence is that of Elongation factor Tu, chloroplastic (tufA) from Guillardia theta (Cryptophyte).